A 178-amino-acid chain; its full sequence is Caveolin-1 (178 aa).

Ser2 bears the N-acetylserine mark. Ser2 carries the post-translational modification Phosphoserine. The segment at 2–94 is required for homooligomerization; the sequence is SGGKYVDSEG…WKASFTTFTV (93 aa). Over 2-104 the chain is Cytoplasmic; the sequence is SGGKYVDSEG…TKYWFYRLLS (103 aa). An N6-acetyllysine; alternate modification is found at Lys5. Lys5 participates in a covalent cross-link: Glycyl lysine isopeptide (Lys-Gly) (interchain with G-Cter in ubiquitin); alternate. Tyr6 bears the Phosphotyrosine mark. Ser9 is modified (phosphoserine). Tyr14 bears the Phosphotyrosine; by ABL1 mark. Tyr25 carries the phosphotyrosine modification. Residues Lys26 and Lys30 each participate in a glycyl lysine isopeptide (Lys-Gly) (interchain with G-Cter in ubiquitin) cross-link. Phosphoserine is present on Ser37. Residues Lys39, Lys47, and Lys57 each participate in a glycyl lysine isopeptide (Lys-Gly) (interchain with G-Cter in ubiquitin) cross-link. The interval 82–94 is interaction with CAVIN3; sequence DGIWKASFTTFTV. Residues 105–125 constitute an intramembrane region (helical); it reads ALFGIPMALIWGIYFAILSFL. Over 126-178 the chain is Cytoplasmic; that stretch reads HIWAVVPCIKSFLIEIQCISRVYSIYIHTVCDPLFEAIGKIFSNVRISLQKEI. Positions 131–142 are interacts with SPRY1, SPRY2, SPRY3 and SPRY4; it reads VPCIKSFLIEIQ. S-palmitoyl cysteine attachment occurs at residues Cys133, Cys143, and Cys156. The interval 149–160 is interacts with SPRY1, SPRY2, and SPRY4; the sequence is SIYIHTVCDPLF. Residues 167-178 are interacts with SPRY1, SPRY2, SPRY3 and SPRY4; that stretch reads FSNVRISLQKEI.

This sequence belongs to the caveolin family. Homooligomer. Interacts with GLIPR2. Interacts with NOSTRIN. Interacts with SNAP25 and STX1A. Interacts (via the N-terminus) with DPP4; the interaction is direct. Interacts with CTNNB1, CDH1 and JUP. Interacts with PACSIN2; this interaction induces membrane tubulation. Interacts with SLC7A9. Interacts with BMX and BTK. Interacts with TGFBR1. Interacts with CAVIN3 (via leucine-zipper domain) in a cholesterol-sensitive manner. Interacts with CAVIN1. Interacts with EHD2 in a cholesterol-dependent manner. Forms a ternary complex with UBXN6 and VCP; mediates CAV1 targeting to lysosomes for degradation. Interacts with ABCG1; this interaction regulates ABCG1-mediated cholesterol efflux. Interacts with NEU3; this interaction enhances NEU3 sialidase activity within caveola. Interacts (via C-terminus) with SPRY1, SPRY2 (via C-terminus), SPRY3, and SPRY4. Interacts with IGFBP5; this interaction allows trafficking of IGFBP5 from the plasma membrane to the nucleus. Post-translationally, phosphorylated at Tyr-14 by ABL1 in response to oxidative stress. In terms of processing, ubiquitinated. Undergo monoubiquitination and multi- and/or polyubiquitination. Monoubiquitination of N-terminal lysines promotes integration in a ternary complex with UBXN6 and VCP which promotes oligomeric CAV1 targeting to lysosomes for degradation. Ubiquitinated by ZNRF1; leading to degradation and modulation of the TLR4-mediated immune response.

The protein resides in the golgi apparatus membrane. It is found in the cell membrane. Its subcellular location is the membrane. It localises to the caveola. The protein localises to the membrane raft. In terms of biological role, may act as a scaffolding protein within caveolar membranes. Forms a stable heterooligomeric complex with CAV2 that targets to lipid rafts and drives caveolae formation. Mediates the recruitment of CAVIN proteins (CAVIN1/2/3/4) to the caveolae. Interacts directly with G-protein alpha subunits and can functionally regulate their activity. Involved in the costimulatory signal essential for T-cell receptor (TCR)-mediated T-cell activation. Its binding to DPP4 induces T-cell proliferation and NF-kappa-B activation in a T-cell receptor/CD3-dependent manner. Recruits CTNNB1 to caveolar membranes and may regulate CTNNB1-mediated signaling through the Wnt pathway. Negatively regulates TGFB1-mediated activation of SMAD2/3 by mediating the internalization of TGFBR1 from membrane rafts leading to its subsequent degradation. Binds 20(S)-hydroxycholesterol (20(S)-OHC). This is Caveolin-1 (CAV1) from Aotus nancymaae (Ma's night monkey).